Consider the following 262-residue polypeptide: Glutamate racemase (262 aa).

Substrate-binding positions include 5–6 (DS) and 37–38 (YG). C69 acts as the Proton donor/acceptor in catalysis. 70 to 71 (NT) lines the substrate pocket. Catalysis depends on C181, which acts as the Proton donor/acceptor. 182–183 (TH) is a substrate binding site.

It belongs to the aspartate/glutamate racemases family.

It carries out the reaction L-glutamate = D-glutamate. It participates in cell wall biogenesis; peptidoglycan biosynthesis. Provides the (R)-glutamate required for cell wall biosynthesis. The chain is Glutamate racemase from Buchnera aphidicola subsp. Acyrthosiphon pisum (strain APS) (Acyrthosiphon pisum symbiotic bacterium).